A 1203-amino-acid chain; its full sequence is DNA-directed RNA polymerase I subunit RPA135 (1203 aa).

Ser-2 carries the post-translational modification N-acetylserine. Ser-81 carries the post-translational modification Phosphoserine. The segment at 1104–1131 adopts a C4-type zinc-finger fold; it reads CRECGSILTTQQSVPRIGSISTVCCRRC. Ser-1156 is modified (phosphoserine).

The protein belongs to the RNA polymerase beta chain family. Component of the RNA polymerase I (Pol I) complex consisting of 14 subunits: RPA135, RPA190, RPC40, RPA14, RPB5, RPO26, RPA43, RPB8, RPA12, RPB10, RPC19, RPC10, RPA49 and RPA34. The complex is composed of a horseshoe-shaped core containing ten subunits (RPA135, RPA190, RPB5, RPO26, RPB8, RPB10, RPC10, RPA12, RPC19 and RPC40) where RPA135 and RPA190 form the DNA-binding cleft. Outside of the core, RPA14 and RPA43 form the stalk that mediates interactions with transcription initiation factors and newly synthesized RNA.

Its subcellular location is the nucleus. The protein resides in the nucleolus. It carries out the reaction RNA(n) + a ribonucleoside 5'-triphosphate = RNA(n+1) + diphosphate. DNA-dependent RNA polymerases catalyze the transcription of DNA into RNA using the four ribonucleoside triphosphates as substrates. Component of RNA polymerase I (Pol I) which synthesizes ribosomal RNA precursors. Besides, RNA polymerase I has intrinsic RNA cleavage activity. RPA190 and RPA135 both contribute to the polymerase catalytic activity and together form the Pol I active center. In addition, subunit RPA12 contributes a catalytic zinc ribbon that is required for RNA cleavage by Pol I. A single stranded DNA template strand of the promoter is positioned within the central active site cleft of Pol I. A bridging helix emanates from RPA190 and crosses the cleft near the catalytic site and is thought to promote translocation of Pol I by acting as a ratchet that moves the RNA-DNA hybrid through the active site by switching from straight to bent conformations at each step of nucleotide addition. This Saccharomyces cerevisiae (strain ATCC 204508 / S288c) (Baker's yeast) protein is DNA-directed RNA polymerase I subunit RPA135 (RPA135).